The chain runs to 166 residues: Signal peptidase complex catalytic subunit SEC11 (166 aa).

Topologically, residues 1–9 (MNIRQQITQ) are cytoplasmic. A helical; Signal-anchor for type II membrane protein transmembrane segment spans residues 10–30 (FLSLAYVFSSAFMLWKTLSVI). Residues 31–166 (ANSHSPIVVV…LGLSSLFSNE (136 aa)) are Lumenal-facing. Active-site charge relay system residues include Ser44, His83, and Asp108. A C-terminal short (CTS) helix region spans residues 152 to 163 (GMLGLLGLSSLF).

It belongs to the peptidase S26B family. Component of the signal peptidase complex (SPC) composed of a catalytic subunit SEC11 and three accessory subunits SPC1, SPC2 and SPC3. The complex induces a local thinning of the ER membrane which is used to measure the length of the signal peptide (SP) h-region of protein substrates. This ensures the selectivity of the complex towards h-regions shorter than 18-20 amino acids. SPC associates with the translocon complex.

It is found in the endoplasmic reticulum membrane. The enzyme catalyses Cleavage of hydrophobic, N-terminal signal or leader sequences from secreted and periplasmic proteins.. In terms of biological role, catalytic component of the signal peptidase complex (SPC) which catalyzes the cleavage of N-terminal signal sequences from nascent proteins as they are translocated into the lumen of the endoplasmic reticulum. Specifically cleaves N-terminal signal peptides that contain a hydrophobic alpha-helix (h-region) shorter than 18-20 amino acids. This Candida dubliniensis (strain CD36 / ATCC MYA-646 / CBS 7987 / NCPF 3949 / NRRL Y-17841) (Yeast) protein is Signal peptidase complex catalytic subunit SEC11 (SEC11).